Here is a 263-residue protein sequence, read N- to C-terminus: Trans-2-decenoyl-[acyl-carrier-protein] isomerase (263 aa).

It belongs to the enoyl-CoA hydratase/isomerase family. In terms of assembly, homotetramer.

The catalysed reaction is (2E)-decenoyl-[ACP] = (3Z)-decenoyl-[ACP]. It participates in lipid metabolism; fatty acid biosynthesis. Its function is as follows. Catalyzes the isomerization of trans-2-decenoyl-ACP to cis-3-decenoyl-ACP. Required for survival at low pH. The polypeptide is Trans-2-decenoyl-[acyl-carrier-protein] isomerase (fabM) (Streptococcus mutans serotype c (strain ATCC 700610 / UA159)).